Here is a 149-residue protein sequence, read N- to C-terminus: Alpha-amylase/trypsin inhibitor CMb (149 aa).

The first 24 residues, 1–24, serve as a signal peptide directing secretion; it reads MASKSSCDLLLAAVLVSIFAAVAA. The N-linked (GlcNAc...) asparagine glycan is linked to Asn124.

The protein belongs to the protease inhibitor I6 (cereal trypsin/alpha-amylase inhibitor) family. Heterotetramer of one CMa, one CMb and two CMd chains. Five disulfide bonds, which are essential for the inhibitor activity, are probably present. Post-translationally, exists both in a glycosylated and in an unglycosylated form. The glycosylated form is a potent allergen. Endosperm.

The protein localises to the secreted. In terms of biological role, part of a complex with inhibitory activity, but CMb is inactive as a separate subunit. The protein is Alpha-amylase/trypsin inhibitor CMb (IAT2) of Hordeum vulgare (Barley).